Consider the following 36-residue polypeptide: Kappa-theraphotoxin-Aa1a (36 aa).

3 disulfides stabilise this stretch: Cys-3/Cys-18, Cys-10/Cys-23, and Cys-17/Cys-30. Isoleucine amide is present on Ile-36.

Belongs to the neurotoxin 10 (Hwtx-1) family. Expressed by the venom gland.

It is found in the secreted. Its function is as follows. Selective inhibitor of voltage-gated potassium channel Kv10.1/KCNH1/EAG1 (IC(50)=637 nM). It acts by shifting the voltage dependence of channel activation in a depolarising direction. It shows a 100% inhibition at saturating concentrations, shows fast on-rates and is reversible. It also slightly affects channel inactivation, when the membrane is highly depolarised (&gt;+80 mV). The sequence is that of Kappa-theraphotoxin-Aa1a from Avicularia aurantiaca (Yellow-banded pinktoe tarantula).